A 295-amino-acid chain; its full sequence is Elongation factor Ts (295 aa).

Residues 79–82 (TDFV) are involved in Mg(2+) ion dislocation from EF-Tu.

The protein belongs to the EF-Ts family.

The protein resides in the cytoplasm. Associates with the EF-Tu.GDP complex and induces the exchange of GDP to GTP. It remains bound to the aminoacyl-tRNA.EF-Tu.GTP complex up to the GTP hydrolysis stage on the ribosome. The chain is Elongation factor Ts from Bacillus cereus (strain G9842).